A 332-amino-acid chain; its full sequence is Glycine betaine-binding periplasmic protein OusX (332 aa).

Positions 1 to 21 (MRNISMATLALTTVLSTGLFA) are cleaved as a signal peptide.

In terms of assembly, the complex is composed of two ATP-binding proteins (OusV), two transmembrane proteins (OusW) and a solute-binding protein (OusX).

Its subcellular location is the periplasm. Part of the OusB ABC transporter complex involved in glycine betaine and choline uptake. Binds glycine betaine. The sequence is that of Glycine betaine-binding periplasmic protein OusX from Dickeya dadantii (strain 3937) (Erwinia chrysanthemi (strain 3937)).